The chain runs to 1827 residues: Laminin subunit beta-4 (1827 aa).

The signal sequence occupies residues 1–21; sequence MLLRLELSALLLLLIAAPVRL. Residues 26–266 enclose the Laminin N-terminal domain; sequence VGNSCYPNLG…ALYEMVVRGS (241 aa). An N-linked (GlcNAc...) asparagine glycan is attached at N231. Intrachain disulfides connect C267–C276, C269–C297, C299–C308, C311–C331, C334–C343, C336–C361, C364–C373, C376–C394, C397–C410, C399–C417, C419–C428, C431–C446, C449–C463, C451–C470, C472–C481, C484–C498, C501–C513, C503–C520, and C522–C531. Laminin EGF-like domains are found at residues 267–333, 334–396, 397–448, and 449–500; these read CFCN…VCKR, CNCH…ACIP, CDCD…GCQL, and CRCN…GCIP. Positions 501–544 constitute a Laminin EGF-like 5; truncated domain; that stretch reads CDCDIGGALKTECSSVDGQCKCRPNMVGQKCNDPAPGYFLAPLD. One can recognise a Laminin IV type B domain in the interval 540-847; sequence LAPLDFYIYE…LIGSMSAFIH (308 aa). Cystine bridges form between C853–C865, C855–C872, C874–C883, C886–C898, C901–C913, C903–C920, C922–C931, C934–C944, C947–C956, C949–C963, C966–C975, C978–C992, C995–C1011, C997–C1022, C1024–C1033, C1036–C1051, C1054–C1068, C1056–C1075, C1078–C1087, C1090–C1103, C1106–C1126, C1108–C1133, C1135–C1144, C1147–C1160, C1163–C1175, C1165–C1182, C1184–C1193, C1196–C1208, C1211–C1223, C1213–C1230, C1232–C1241, and C1244–C1255. 8 consecutive Laminin EGF-like domains span residues 853–900, 901–946, 947–994, 995–1053, 1054–1105, 1106–1162, 1163–1210, and 1211–1257; these read CNCH…GCSP, CDCD…LCRR, CQCN…PCEP, CLCP…RCKE, CCCN…DCKE, CSCD…GCQP, CNCN…QCMF, and CDCN…ACEP. The N-linked (GlcNAc...) asparagine glycan is linked to N1001. The tract at residues 1258-1449 is domain II; that stretch reads CHACNHLWEK…LSAANINEEV (192 aa). Coiled-coil stretches lie at residues 1294–1335 and 1385–1449; these read ELQH…EIID and NKIK…NEEV. N-linked (GlcNAc...) asparagine glycosylation occurs at N1329. The segment at 1450–1476 is domain alpha; the sequence is CGAPGDAECEKAKCGGALCGKCGGPDC. The segment at 1477–1827 is domain I; it reads TGSLPISLNA…KVQRYNLCSP (351 aa). N-linked (GlcNAc...) asparagine glycosylation is found at N1485, N1496, N1513, N1533, N1599, N1629, N1644, N1672, N1686, N1702, N1726, N1745, N1750, and N1761. 2 coiled-coil regions span residues 1485–1554 and 1584–1820; these read NASK…EKVK and DEIK…DKVQ.

In terms of assembly, laminin is a complex glycoprotein, consisting of three different polypeptide chains (alpha, beta, gamma), which are bound to each other by disulfide bonds into a cross-shaped molecule comprising one long and three short arms with globules at each end.

It is found in the secreted. It localises to the extracellular space. The protein localises to the extracellular matrix. Its subcellular location is the basement membrane. Its function is as follows. Binding to cells via a high affinity receptor, laminin is thought to mediate the attachment, migration and organization of cells into tissues during embryonic development by interacting with other extracellular matrix components. Positively regulates apical-basal distribution of Muller glia cells in the retina. This is Laminin subunit beta-4 (lamb4) from Danio rerio (Zebrafish).